The chain runs to 268 residues: Shikimate dehydrogenase (NADP(+)) (268 aa).

Residues 13-15 (SLS) and threonine 60 each bind shikimate. Residue lysine 64 is the Proton acceptor of the active site. Position 76 (glutamate 76) interacts with NADP(+). Residues asparagine 85 and aspartate 100 each coordinate shikimate. Residues 124–128 (GAGGA), 148–153 (NRTMAR), and isoleucine 209 each bind NADP(+). Residue tyrosine 211 coordinates shikimate. Glycine 232 is a binding site for NADP(+).

This sequence belongs to the shikimate dehydrogenase family. Homodimer.

It carries out the reaction shikimate + NADP(+) = 3-dehydroshikimate + NADPH + H(+). Its pathway is metabolic intermediate biosynthesis; chorismate biosynthesis; chorismate from D-erythrose 4-phosphate and phosphoenolpyruvate: step 4/7. Functionally, involved in the biosynthesis of the chorismate, which leads to the biosynthesis of aromatic amino acids. Catalyzes the reversible NADPH linked reduction of 3-dehydroshikimate (DHSA) to yield shikimate (SA). The protein is Shikimate dehydrogenase (NADP(+)) of Staphylococcus aureus (strain MRSA252).